Consider the following 530-residue polypeptide: Chaperone Ric-8A (530 aa).

Ser435 carries the post-translational modification Phosphoserine. Phosphothreonine occurs at positions 440 and 442. Phosphoserine occurs at positions 501, 522, 523, and 527.

It belongs to the synembryn family. As to quaternary structure, interacts with GDP-bound G alpha proteins GNAI1, GNAO1 and GNAQ, and with GNA13 with lower affinity. Does not interact with G-alpha proteins when they are in complex with subunits beta and gamma. Interacts (via C-terminus) with RGS14; the interaction stimulates the dissociation of the complex between RGS14 and the active GTP-bound form of GNAI1. Interacts with NCS1; interaction is favored in the absence of Ca(2+) and myristoylation of NCS1 is not required. Post-translationally, phosphorylated at Ser-435 and Thr-440 by CK2, stabilizing its interface with G alpha proteins.

The protein localises to the cytoplasm. It is found in the cell cortex. Functionally, chaperone that specifically binds and folds nascent G alpha proteins prior to G protein heterotrimer formation, promoting their stability and activity: folds GNAI1, GNAO1, GNA13 and GNAQ. Does not fold G(s) G-alpha proteins GNAS nor GNAL. Also acts as a guanine nucleotide exchange factor (GEF) for G alpha proteins by stimulating exchange of bound GDP for free GTP. Involved in regulation of microtubule pulling forces during mitotic movement of chromosomes by stimulating G(i)-alpha protein (GNAI1), possibly leading to release G(i)-alpha-GTP and NuMA proteins from the NuMA-GPSM2-G(i)-alpha-GDP complex. Also acts as an activator for G(q)-alpha (GNAQ) protein by enhancing the G(q)-coupled receptor-mediated ERK activation. This chain is Chaperone Ric-8A (RIC8A), found in Bos taurus (Bovine).